Consider the following 542-residue polypeptide: Chaperonin GroEL 2 (542 aa).

Residues Thr30–Pro33, Lys51, Asp87–Thr91, Gly415, and Asp496 each bind ATP.

This sequence belongs to the chaperonin (HSP60) family. As to quaternary structure, forms a cylinder of 14 subunits composed of two heptameric rings stacked back-to-back. Interacts with the co-chaperonin GroES.

It is found in the cytoplasm. It carries out the reaction ATP + H2O + a folded polypeptide = ADP + phosphate + an unfolded polypeptide.. Functionally, together with its co-chaperonin GroES, plays an essential role in assisting protein folding. The GroEL-GroES system forms a nano-cage that allows encapsulation of the non-native substrate proteins and provides a physical environment optimized to promote and accelerate protein folding. This is Chaperonin GroEL 2 from Cereibacter sphaeroides (strain ATCC 17023 / DSM 158 / JCM 6121 / CCUG 31486 / LMG 2827 / NBRC 12203 / NCIMB 8253 / ATH 2.4.1.) (Rhodobacter sphaeroides).